Consider the following 422-residue polypeptide: Glucose-1-phosphate adenylyltransferase (422 aa).

Alpha-D-glucose 1-phosphate contacts are provided by residues Tyr-109, Gly-175, 190–191 (EK), and Ser-208.

This sequence belongs to the bacterial/plant glucose-1-phosphate adenylyltransferase family. As to quaternary structure, homotetramer.

The enzyme catalyses alpha-D-glucose 1-phosphate + ATP + H(+) = ADP-alpha-D-glucose + diphosphate. The protein operates within glycan biosynthesis; glycogen biosynthesis. Functionally, involved in the biosynthesis of ADP-glucose, a building block required for the elongation reactions to produce glycogen. Catalyzes the reaction between ATP and alpha-D-glucose 1-phosphate (G1P) to produce pyrophosphate and ADP-Glc. The sequence is that of Glucose-1-phosphate adenylyltransferase from Shewanella amazonensis (strain ATCC BAA-1098 / SB2B).